A 205-amino-acid chain; its full sequence is Proteasome subunit beta (205 aa).

Residues 1 to 9 (MNQTENMEG) constitute a propeptide, removed in mature form; by autocatalysis. The active-site Nucleophile is T10.

Belongs to the peptidase T1B family. In terms of assembly, the 20S proteasome core is composed of 14 alpha and 14 beta subunits that assemble into four stacked heptameric rings, resulting in a barrel-shaped structure. The two inner rings, each composed of seven catalytic beta subunits, are sandwiched by two outer rings, each composed of seven alpha subunits. The catalytic chamber with the active sites is on the inside of the barrel. Has a gated structure, the ends of the cylinder being occluded by the N-termini of the alpha-subunits. Is capped at one or both ends by the proteasome regulatory ATPase, PAN.

It is found in the cytoplasm. The enzyme catalyses Cleavage of peptide bonds with very broad specificity.. With respect to regulation, the formation of the proteasomal ATPase PAN-20S proteasome complex, via the docking of the C-termini of PAN into the intersubunit pockets in the alpha-rings, triggers opening of the gate for substrate entry. Interconversion between the open-gate and close-gate conformations leads to a dynamic regulation of the 20S proteasome proteolysis activity. In terms of biological role, component of the proteasome core, a large protease complex with broad specificity involved in protein degradation. This is Proteasome subunit beta from Methanosphaera stadtmanae (strain ATCC 43021 / DSM 3091 / JCM 11832 / MCB-3).